The chain runs to 367 residues: MEKSSIYGLTWTKLTEWLEAHGQKKFRATQVWDWLYRKRVKTFEEMSNVPKETIELLTANFVMNTLEEQVVQESTDGTTKYLFKLSDGNLIETVMMKQEYGLSVCVTTQVGCNIGCTFCASGLLKKSRDLTAGEIVEQIMNVQHYLDGRNLEERVSHVVVMGIGEPFDNYDNVMDFLRVINHDKGLAIGARHITVSTSGLAPRIIDFANEDFQVNLAISLHAPNNELRTSIMRINKTYSIEKLMEAIHYYVNKTNRRITFEYIMLKGVNDHKKEALELAALLGEHRHLAYVNLIPYNPVDEHIDYERSTKEDVLAFYDTLKKNGINCVIRREHGTDIDAACGQLRSKQIKRVGVRERMKQKQAAAEE.

The active-site Proton acceptor is E92. Positions 98–326 (QEYGLSVCVT…YDTLKKNGIN (229 aa)) constitute a Radical SAM core domain. C105 and C341 are oxidised to a cystine. 3 residues coordinate [4Fe-4S] cluster: C112, C116, and C119. S-adenosyl-L-methionine contacts are provided by residues 164–165 (GE), S196, 219–221 (SLH), and N297. C341 serves as the catalytic S-methylcysteine intermediate.

Belongs to the radical SAM superfamily. RlmN family. [4Fe-4S] cluster is required as a cofactor.

It localises to the cytoplasm. The catalysed reaction is adenosine(2503) in 23S rRNA + 2 reduced [2Fe-2S]-[ferredoxin] + 2 S-adenosyl-L-methionine = 2-methyladenosine(2503) in 23S rRNA + 5'-deoxyadenosine + L-methionine + 2 oxidized [2Fe-2S]-[ferredoxin] + S-adenosyl-L-homocysteine. It carries out the reaction adenosine(37) in tRNA + 2 reduced [2Fe-2S]-[ferredoxin] + 2 S-adenosyl-L-methionine = 2-methyladenosine(37) in tRNA + 5'-deoxyadenosine + L-methionine + 2 oxidized [2Fe-2S]-[ferredoxin] + S-adenosyl-L-homocysteine. In terms of biological role, specifically methylates position 2 of adenine 2503 in 23S rRNA and position 2 of adenine 37 in tRNAs. The sequence is that of Probable dual-specificity RNA methyltransferase RlmN from Listeria innocua serovar 6a (strain ATCC BAA-680 / CLIP 11262).